A 61-amino-acid chain; its full sequence is Small ribosomal subunit protein uS14B (61 aa).

Zn(2+) is bound by residues C24, C27, C40, and C43.

Belongs to the universal ribosomal protein uS14 family. Zinc-binding uS14 subfamily. As to quaternary structure, part of the 30S ribosomal subunit. Contacts proteins S3 and S10. It depends on Zn(2+) as a cofactor.

Functionally, binds 16S rRNA, required for the assembly of 30S particles and may also be responsible for determining the conformation of the 16S rRNA at the A site. The chain is Small ribosomal subunit protein uS14B from Nocardia farcinica (strain IFM 10152).